The sequence spans 540 residues: Glucose-6-phosphate isomerase (540 aa).

Residue glutamate 350 is the Proton donor of the active site. Catalysis depends on residues histidine 381 and lysine 503.

This sequence belongs to the GPI family.

Its subcellular location is the cytoplasm. The catalysed reaction is alpha-D-glucose 6-phosphate = beta-D-fructose 6-phosphate. Its pathway is carbohydrate biosynthesis; gluconeogenesis. It participates in carbohydrate degradation; glycolysis; D-glyceraldehyde 3-phosphate and glycerone phosphate from D-glucose: step 2/4. Its function is as follows. Catalyzes the reversible isomerization of glucose-6-phosphate to fructose-6-phosphate. This Burkholderia cenocepacia (strain ATCC BAA-245 / DSM 16553 / LMG 16656 / NCTC 13227 / J2315 / CF5610) (Burkholderia cepacia (strain J2315)) protein is Glucose-6-phosphate isomerase.